The chain runs to 764 residues: 5-methyltetrahydropteroyltriglutamate--homocysteine methyltransferase (764 aa).

5-methyltetrahydropteroyltri-L-glutamate contacts are provided by residues 16 to 19 (RELK) and lysine 115. Residues 435–437 (IGS) and glutamate 488 contribute to the L-homocysteine site. L-methionine-binding positions include 435-437 (IGS) and glutamate 488. Residues 519 to 520 (RC) and tryptophan 565 contribute to the 5-methyltetrahydropteroyltri-L-glutamate site. An L-homocysteine-binding site is contributed by aspartate 603. Aspartate 603 contributes to the L-methionine binding site. Glutamate 609 provides a ligand contact to 5-methyltetrahydropteroyltri-L-glutamate. Positions 645, 647, and 669 each coordinate Zn(2+). Histidine 698 serves as the catalytic Proton donor. Cysteine 730 serves as a coordination point for Zn(2+).

It belongs to the vitamin-B12 independent methionine synthase family. Requires Zn(2+) as cofactor.

The enzyme catalyses 5-methyltetrahydropteroyltri-L-glutamate + L-homocysteine = tetrahydropteroyltri-L-glutamate + L-methionine. It participates in amino-acid biosynthesis; L-methionine biosynthesis via de novo pathway; L-methionine from L-homocysteine (MetE route): step 1/1. Its function is as follows. Catalyzes the transfer of a methyl group from 5-methyltetrahydrofolate to homocysteine resulting in methionine formation. The protein is 5-methyltetrahydropteroyltriglutamate--homocysteine methyltransferase of Burkholderia pseudomallei (strain K96243).